The chain runs to 586 residues: Glutamate--tRNA ligase (586 aa).

A disordered region spans residues 84 to 111 (LTDIESEDTTDTYDLPSLPGVSDDEPTQ). The segment covering 85-94 (TDIESEDTTD) has biased composition (acidic residues). The short motif at 119–129 (PNPNGPWHIGH) is the 'HIGH' region element.

The protein belongs to the class-I aminoacyl-tRNA synthetase family. Glutamate--tRNA ligase type 2 subfamily.

The protein localises to the cytoplasm. The enzyme catalyses tRNA(Glu) + L-glutamate + ATP = L-glutamyl-tRNA(Glu) + AMP + diphosphate. Catalyzes the attachment of glutamate to tRNA(Glu) in a two-step reaction: glutamate is first activated by ATP to form Glu-AMP and then transferred to the acceptor end of tRNA(Glu). The protein is Glutamate--tRNA ligase of Haloquadratum walsbyi (strain DSM 16790 / HBSQ001).